Here is a 213-residue protein sequence, read N- to C-terminus: Probable thiopurine S-methyltransferase (213 aa).

S-adenosyl-L-methionine contacts are provided by tryptophan 10, leucine 45, glutamate 66, and arginine 125.

It belongs to the class I-like SAM-binding methyltransferase superfamily. TPMT family.

Its subcellular location is the cytoplasm. It catalyses the reaction S-adenosyl-L-methionine + a thiopurine = S-adenosyl-L-homocysteine + a thiopurine S-methylether.. The sequence is that of Probable thiopurine S-methyltransferase from Yarrowia lipolytica (strain CLIB 122 / E 150) (Yeast).